Consider the following 354-residue polypeptide: Protein-arginine kinase (354 aa).

A Phosphagen kinase C-terminal domain is found at 24–254; sequence IVLSSRIRLA…QQIIQQEKLA (231 aa). ATP is bound by residues 27 to 31, His92, Arg125, 176 to 180, and 207 to 212; these read SSRIR, RASVM, and RGIYGE. Positions 337 to 342 match the RDXXRA motif of the pArg binding pocket involved in allosteric regulation motif; it reads RDYRRA.

Belongs to the ATP:guanido phosphotransferase family.

The enzyme catalyses L-arginyl-[protein] + ATP = N(omega)-phospho-L-arginyl-[protein] + ADP + H(+). Appears to be allosterically activated by the binding of pArg-containing polypeptides to the pArg-binding pocket localized in the C-terminal domain of McsB. In terms of biological role, catalyzes the specific phosphorylation of arginine residues in a large number of proteins. Is part of the bacterial stress response system. Protein arginine phosphorylation has a physiologically important role and is involved in the regulation of many critical cellular processes, such as protein homeostasis, motility, competence, and stringent and stress responses, by regulating gene expression and protein activity. The protein is Protein-arginine kinase of Bacillus cereus (strain B4264).